Reading from the N-terminus, the 428-residue chain is UPF0597 protein BF3772 (428 aa).

The protein belongs to the UPF0597 family.

In Bacteroides fragilis (strain YCH46), this protein is UPF0597 protein BF3772.